The primary structure comprises 603 residues: Ankyrin repeat and LEM domain-containing protein 2 homolog (603 aa).

The helical; Signal-anchor for type III membrane protein transmembrane segment at 2–22 (GRKSAILAVILAIIYFRSNFS) threads the bilayer. ANK repeat units follow at residues 161 to 190 (FRYNALHIAAKAGQTEIIAKILELIQNIDF) and 221 to 250 (NSDTPLHFASKFGKIGVVRVLTENSATDRT). 2 disordered regions span residues 446-465 (ISENLTPDGSDSADDEDDDD) and 505-538 (LPPPPPPQWSNSPNFDYSEGEDSFATPPTTPPPT). Acidic residues predominate over residues 456-465 (DSADDEDDDD).

The protein belongs to the ANKLE2 family. In terms of assembly, interacts with baf-1. Interacts with protein phosphatase 2A (PP2A) components.

It localises to the nucleus membrane. Involved in mitotic nuclear envelope reassembly by promoting dephosphorylation of baf-1 during mitotic exit. Coordinates the control of baf-1 dephosphorylation by inhibiting VRK1 kinase and promoting dephosphorylation of baf-1 by protein phosphatase 2A (PP2A), thereby facilitating nuclear envelope assembly. It is unclear whether it acts as a real PP2A regulatory subunit or whether it is involved in recruitment of the PP2A complex. The sequence is that of Ankyrin repeat and LEM domain-containing protein 2 homolog (lem-4) from Caenorhabditis elegans.